The sequence spans 67 residues: uncharacterized protein (67 aa).

This is an uncharacterized protein from Escherichia coli (strain K12).